An 85-amino-acid polypeptide reads, in one-letter code: IVGGRAAEPHSRPYMVSLQIRGNPGSHFCGGTLIMGWGRLGTREPLPXVLQELNVTVVTAGICFGDSGGPLICNGVAQGVFSFVR.

Positions 1–85 (IVGGRAAEPH…VAQGVFSFVR (85 aa)) constitute a Peptidase S1 domain. Serine 67 functions as the Charge relay system in the catalytic mechanism.

Belongs to the peptidase S1 family. Elastase subfamily.

May be involved in the degradation of connective tissue in chronic lung disease. The polypeptide is Neutrophil elastase 2A (Equus caballus (Horse)).